The primary structure comprises 956 residues: MTQKLQKIVLPPVYGPADFEARVYACWEQRQAFSPRARGSGTSDSEGCDGHSRQIEGGARTFVIAIPPPNITGVLHMGHCLNTVLQDIVIRYQRMAGACTLWIPGTDHAGIATQHVVERALRKEGIHKREVTREQFVARTQQIKDSHQDTIRMQLRKMGASCDWTCERFTLDAGMSASVREAFVTLYERGLLYRSMYLVNWCPRCGTALSDDEVFHQEKDGALYYVRYPLLPRTEEEGNGVPPPLGTAQVGETIIIATTRPETILADVAVAVHPDDARYQSLIGRKVCVPMVNRIVPIIADSYVAQDFGTGMVKITPAHDPNDWDIGTRHSLEAINMLNPDGSLNDQVPAAYRGLSCAQARIQIVADLQAHGLLSREERIVHSVGVCYRCEAVIEPYLSLQWFVKMKPLASQALAAWKRADVQFHPKKWENTYVRWLEHIRDWCISRQLWWGHRIPVWYCAQCAQQTVSRVDVQRCAHCGSADITQDPDVLDTWFSSWLWPFSTLGWPQETQKLRAFYPTSAVITAYDIIFFWVARMIMAGLEFTQTVPFRDVYLHGLVRDKQGRKMSKSLNNGVDPLHIIRTYGADALRFTLAFMCAQGQDVLIEMDSFKMGSRFANKVWNASRYILGNLEGRRVYAIAHVSLTELDRWIFHTFNETVQQVRTALEAYRFNDAAQAVYEFFWNSFCDWYVEASKCSFQKPDEQEKDRAASVLCTLLEETLRLLHPFLPFVTEEIYRSLSPSVHDTTQAIPSGAHALLMCAPYPVYVPSRVDARACAHIGAVQEIVRAVRTLRAACGIDPQKAVSVRLRPSSPAQDANAAAQVSCVHDPGAVARTYEELICVLAGISSLVYLESDAPKPQVAVATAGTGFELFLVTTEGIDRTMLCARLQKAWQKARQKVQQVERKLADAQFCTHAPEEVVTAERKKLAEARATCHTLAGYLADMNGKPGPLSDSD.

The 'HIGH' region motif lies at 69-79 (PNITGVLHMGH). Positions 566-570 (KMSKS) match the 'KMSKS' region motif. Lys-569 is a binding site for ATP. Residues 885–911 (LCARLQKAWQKARQKVQQVERKLADAQ) adopt a coiled-coil conformation.

The protein belongs to the class-I aminoacyl-tRNA synthetase family. ValS type 1 subfamily. As to quaternary structure, monomer.

Its subcellular location is the cytoplasm. The enzyme catalyses tRNA(Val) + L-valine + ATP = L-valyl-tRNA(Val) + AMP + diphosphate. Functionally, catalyzes the attachment of valine to tRNA(Val). As ValRS can inadvertently accommodate and process structurally similar amino acids such as threonine, to avoid such errors, it has a 'posttransfer' editing activity that hydrolyzes mischarged Thr-tRNA(Val) in a tRNA-dependent manner. This is Valine--tRNA ligase from Treponema pallidum (strain Nichols).